The sequence spans 1490 residues: DNA-directed RNA polymerase subunit beta' (1490 aa).

Zn(2+) is bound by residues Cys67, Cys69, Cys82, and Cys85. 3 residues coordinate Mg(2+): Asp499, Asp501, and Asp503. Cys868, Cys944, Cys951, and Cys954 together coordinate Zn(2+).

This sequence belongs to the RNA polymerase beta' chain family. As to quaternary structure, the RNAP catalytic core consists of 2 alpha, 1 beta, 1 beta' and 1 omega subunit. When a sigma factor is associated with the core the holoenzyme is formed, which can initiate transcription. Requires Mg(2+) as cofactor. Zn(2+) is required as a cofactor.

It catalyses the reaction RNA(n) + a ribonucleoside 5'-triphosphate = RNA(n+1) + diphosphate. In terms of biological role, DNA-dependent RNA polymerase catalyzes the transcription of DNA into RNA using the four ribonucleoside triphosphates as substrates. This chain is DNA-directed RNA polymerase subunit beta', found in Chlorobaculum tepidum (strain ATCC 49652 / DSM 12025 / NBRC 103806 / TLS) (Chlorobium tepidum).